Reading from the N-terminus, the 141-residue chain is Large ribosomal subunit protein uL22c (141 aa).

It belongs to the universal ribosomal protein uL22 family. Part of the 50S ribosomal subunit.

The protein resides in the plastid. Its subcellular location is the chloroplast. This protein binds specifically to 23S rRNA. Functionally, the globular domain of the protein is located near the polypeptide exit tunnel on the outside of the subunit, while an extended beta-hairpin is found that lines the wall of the exit tunnel in the center of the 70S ribosome. This Chloranthus spicatus (Chulantree) protein is Large ribosomal subunit protein uL22c (rpl22).